Consider the following 947-residue polypeptide: ATPase 10, plasma membrane-type (947 aa).

The Cytoplasmic portion of the chain corresponds to 1-69 (MAEDLDKPLL…EKQENRFVKF (69 aa)). A helical transmembrane segment spans residues 70-89 (LGFMWNPLSWVMEAAALMAI). Over 90-101 (ALANSQSLGPDW) the chain is Extracellular. Residues 102–122 (EDFTGIVCLLLINATISFFEE) traverse the membrane as a helical segment. The Cytoplasmic portion of the chain corresponds to 123–251 (NNAGNAAAAL…GHFQQVLTSI (129 aa)). A helical transmembrane segment spans residues 252 to 272 (GNFCICSIAVGMVLEIIIMFP). Residues 273–281 (VQHRSYRIG) lie on the Extracellular side of the membrane. A helical membrane pass occupies residues 282-299 (INNLLVLLIGGIPIAMPT). Over 300-650 (VLSVTLAIGS…TSRAIFQRMR (351 aa)) the chain is Cytoplasmic. Asp-337 functions as the 4-aspartylphosphate intermediate in the catalytic mechanism. Asp-595 and Asp-599 together coordinate Mg(2+). Residues 651-672 (NYTVYAVSITIRIVLGFTLLAL) form a helical membrane-spanning segment. Residues 673–677 (IWEYD) lie on the Extracellular side of the membrane. Residues 678–700 (FPPFMVLIIAILNDGTIMTISKD) form a helical membrane-spanning segment. Over 701-716 (RVRPSPTPESWKLNQI) the chain is Cytoplasmic. A helical transmembrane segment spans residues 717–737 (FATGIVIGTYLALVTVLFYWI). The Extracellular segment spans residues 738 to 758 (IVSTTFFEKHFHVKSIANNSE). Residues 759–779 (QVSSAMYLQVSIISQALIFVT) traverse the membrane as a helical segment. Topologically, residues 780-791 (RSRGWSFFERPG) are cytoplasmic. The chain crosses the membrane as a helical span at residues 792-812 (TLLIFAFILAQLAATLIAVYA). The Extracellular portion of the chain corresponds to 813–820 (NISFAKIT). The helical transmembrane segment at 821–841 (GIGWRWAGVIWLYSLIFYIPL) threads the bilayer. The Cytoplasmic segment spans residues 842-947 (DVIKFVFHYA…QRMIRAAHTV (106 aa)). A phosphoserine mark is found at Ser-897 and Ser-929. Thr-946 carries the phosphothreonine modification.

Belongs to the cation transport ATPase (P-type) (TC 3.A.3) family. Type IIIA subfamily. In terms of tissue distribution, found primarily in developing seeds. Expressed in guard cells, mesophyll cells, leaves and roots.

It is found in the membrane. It carries out the reaction ATP + H2O + H(+)(in) = ADP + phosphate + 2 H(+)(out). In terms of biological role, the plasma membrane H(+) ATPase of plants and fungi generates a proton gradient that drives the active transport of nutrients by H(+)-symport. The resulting external acidification and/or internal alkinization may mediate growth responses. This chain is ATPase 10, plasma membrane-type (AHA10), found in Arabidopsis thaliana (Mouse-ear cress).